We begin with the raw amino-acid sequence, 293 residues long: Methoxy mycolic acid synthase MmaA3 (293 aa).

Residues 39–40 (YS), 78–80 (GCG), 100–105 (TLSKNQ), 129–130 (WA), and I142 contribute to the S-adenosyl-L-methionine site. The active site involves C275.

The protein belongs to the CFA/CMAS family.

It functions in the pathway lipid metabolism; mycolic acid biosynthesis. In terms of biological role, involved in the biosynthesis of methoxymycolic acid. It catalyzes the O-methylation of the hydroxy group of the hydroxymycolate to form a methyl ether. The polypeptide is Methoxy mycolic acid synthase MmaA3 (cmaB) (Mycobacterium bovis (strain ATCC BAA-935 / AF2122/97)).